The primary structure comprises 459 residues: Type I restriction enzyme HindI specificity subunit (459 aa).

This sequence belongs to the type-I restriction system S methylase family. The type I restriction/modification system is composed of three polypeptides R, M and S; the restriction enzyme has stoichiometry R(2)M(2)S(1) while the methyltransferase is M(2)S(1).

Its function is as follows. The specificity (S) subunit of a type I restriction enzyme; this subunit dictates DNA sequence specificity. The M and S subunits together form a methyltransferase (MTase) that methylates adenosines in the sequence 5'-RAACN(5)TAG-3'. Methylation protects against cleavage by HindI. In the presence of the R subunit the complex can also act as an endonuclease, binding to the same target sequence but cutting the DNA some distance from this site. Whether the DNA is cut or modified depends on the methylation state of the target sequence. When the target site is unmodified, the DNA is cut. When the target site is hemimethylated, the complex acts as a maintenance MTase modifying the DNA so that both strands become methylated. After locating a non-methylated recognition site, the enzyme complex serves as a molecular motor that translocates DNA in an ATP-dependent manner until a collision occurs that triggers cleavage. This Haemophilus influenzae (strain ATCC 51907 / DSM 11121 / KW20 / Rd) protein is Type I restriction enzyme HindI specificity subunit.